A 160-amino-acid chain; its full sequence is 6,7-dimethyl-8-ribityllumazine synthase (160 aa).

5-amino-6-(D-ribitylamino)uracil-binding positions include Trp26, 59-61 (AVE), and 81-83 (VVI). 86 to 87 (GT) lines the (2S)-2-hydroxy-3-oxobutyl phosphate pocket. The active-site Proton donor is His89. Residue Phe114 coordinates 5-amino-6-(D-ribitylamino)uracil. Arg128 is a (2S)-2-hydroxy-3-oxobutyl phosphate binding site.

This sequence belongs to the DMRL synthase family.

The catalysed reaction is (2S)-2-hydroxy-3-oxobutyl phosphate + 5-amino-6-(D-ribitylamino)uracil = 6,7-dimethyl-8-(1-D-ribityl)lumazine + phosphate + 2 H2O + H(+). Its pathway is cofactor biosynthesis; riboflavin biosynthesis; riboflavin from 2-hydroxy-3-oxobutyl phosphate and 5-amino-6-(D-ribitylamino)uracil: step 1/2. In terms of biological role, catalyzes the formation of 6,7-dimethyl-8-ribityllumazine by condensation of 5-amino-6-(D-ribitylamino)uracil with 3,4-dihydroxy-2-butanone 4-phosphate. This is the penultimate step in the biosynthesis of riboflavin. The sequence is that of 6,7-dimethyl-8-ribityllumazine synthase from Frankia casuarinae (strain DSM 45818 / CECT 9043 / HFP020203 / CcI3).